Reading from the N-terminus, the 875-residue chain is Leucine--tRNA ligase (875 aa).

A 'HIGH' region motif is present at residues 57 to 67 (PYPSGQIHMGH). Residues 631-635 (KMSKS) carry the 'KMSKS' region motif. Position 634 (Lys634) interacts with ATP.

This sequence belongs to the class-I aminoacyl-tRNA synthetase family.

It localises to the cytoplasm. It carries out the reaction tRNA(Leu) + L-leucine + ATP = L-leucyl-tRNA(Leu) + AMP + diphosphate. The sequence is that of Leucine--tRNA ligase from Granulibacter bethesdensis (strain ATCC BAA-1260 / CGDNIH1).